Consider the following 156-residue polypeptide: Transcriptional repressor NrdR (156 aa).

A zinc finger lies at Cys-3 to Cys-34. One can recognise an ATP-cone domain in the interval Leu-49–Asp-139.

The protein belongs to the NrdR family. Requires Zn(2+) as cofactor.

Functionally, negatively regulates transcription of bacterial ribonucleotide reductase nrd genes and operons by binding to NrdR-boxes. The sequence is that of Transcriptional repressor NrdR from Ruegeria pomeroyi (strain ATCC 700808 / DSM 15171 / DSS-3) (Silicibacter pomeroyi).